An 85-amino-acid polypeptide reads, in one-letter code: Large ribosomal subunit protein eL43 (85 aa).

4 residues coordinate Zn(2+): cysteine 32, cysteine 35, cysteine 50, and cysteine 53. The C4-type zinc finger occupies 32–53 (CTFCGKTKMKRRAVGIWHCGSC).

This sequence belongs to the eukaryotic ribosomal protein eL43 family. In terms of assembly, component of the large ribosomal subunit.

The protein resides in the cytoplasm. Its function is as follows. Component of the large ribosomal subunit. The ribosome is a large ribonucleoprotein complex responsible for the synthesis of proteins in the cell. The chain is Large ribosomal subunit protein eL43 (rpl37a) from Myxine glutinosa (Atlantic hagfish).